We begin with the raw amino-acid sequence, 162 residues long: MNEETQNAAAQQETGAQFTIQRIYTKDVSFETPNSPAIFQKEWTPEVKLDLDTRSNKLDEGVFEVVLALTVTASIGEETAFLCEIQQAGIFTIADVEETQLAHMLGAFCPNVLFPYAREAVSNLVNRGTFPQLNLAPVNFDALFAQYMQQRTAQAEQASVDA.

It belongs to the SecB family. Homotetramer, a dimer of dimers. One homotetramer interacts with 1 SecA dimer.

The protein localises to the cytoplasm. Its function is as follows. One of the proteins required for the normal export of preproteins out of the cell cytoplasm. It is a molecular chaperone that binds to a subset of precursor proteins, maintaining them in a translocation-competent state. It also specifically binds to its receptor SecA. The sequence is that of Protein-export protein SecB from Pseudoalteromonas translucida (strain TAC 125).